Here is a 185-residue protein sequence, read N- to C-terminus: Acireductone dioxygenase (185 aa).

H97, H99, E103, and H141 together coordinate Fe(2+). Ni(2+) is bound by residues H97, H99, E103, and H141.

This sequence belongs to the acireductone dioxygenase (ARD) family. As to quaternary structure, monomer. Fe(2+) serves as cofactor. Requires Ni(2+) as cofactor.

It catalyses the reaction 1,2-dihydroxy-5-(methylsulfanyl)pent-1-en-3-one + O2 = 3-(methylsulfanyl)propanoate + CO + formate + 2 H(+). The enzyme catalyses 1,2-dihydroxy-5-(methylsulfanyl)pent-1-en-3-one + O2 = 4-methylsulfanyl-2-oxobutanoate + formate + 2 H(+). It participates in amino-acid biosynthesis; L-methionine biosynthesis via salvage pathway; L-methionine from S-methyl-5-thio-alpha-D-ribose 1-phosphate: step 5/6. Its function is as follows. Catalyzes 2 different reactions between oxygen and the acireductone 1,2-dihydroxy-3-keto-5-methylthiopentene (DHK-MTPene) depending upon the metal bound in the active site. Fe-containing acireductone dioxygenase (Fe-ARD) produces formate and 2-keto-4-methylthiobutyrate (KMTB), the alpha-ketoacid precursor of methionine in the methionine recycle pathway. Ni-containing acireductone dioxygenase (Ni-ARD) produces methylthiopropionate, carbon monoxide and formate, and does not lie on the methionine recycle pathway. The protein is Acireductone dioxygenase of Stenotrophomonas maltophilia (strain R551-3).